Reading from the N-terminus, the 246-residue chain is Major prion protein (246 aa).

Positions 1–15 (MLVLFVATWSDLGLC) are cleaved as a signal peptide. The tract at residues 16 to 223 (KKRPKPGGWN…ESQAYYQRGS (208 aa)) is interaction with GRB2, ERI3 and SYN1. The tract at residues 18–102 (RPKPGGWNTG…HKPSKPKTSM (85 aa)) is disordered. 5 consecutive repeat copies span residues 44 to 52 (PQGGGGWGQ), 53 to 60 (PHGGGWGQ), 61 to 68 (PHGGGWGQ), 69 to 76 (PHGGGWGQ), and 77 to 84 (PHGGGWGQ). The tract at residues 44–84 (PQGGGGWGQPHGGGWGQPHGGGWGQPHGGGWGQPHGGGWGQ) is 5 X 8 AA tandem repeats of P-H-G-G-G-W-G-Q. The span at 45 to 88 (QGGGGWGQPHGGGWGQPHGGGWGQPHGGGWGQPHGGGWGQGGGT) shows a compositional bias: gly residues. Cu(2+)-binding residues include His54, Gly55, Gly56, His62, Gly63, Gly64, His70, Gly71, Gly72, His78, Gly79, and Gly80. The segment covering 91–102 (QWHKPSKPKTSM) has biased composition (basic residues). A disulfide bridge connects residues Cys172 and Cys207. N-linked (GlcNAc...) asparagine glycans are attached at residues Asn174 and Asn190. A lipid anchor (GPI-anchor amidated serine) is attached at Ser223. Residues 224–246 (SMVLFSSPPVILLISFLIFLIVG) constitute a propeptide, removed in mature form.

Belongs to the prion family. As to quaternary structure, monomer and homodimer. Has a tendency to aggregate into amyloid fibrils containing a cross-beta spine, formed by a steric zipper of superposed beta-strands. Soluble oligomers may represent an intermediate stage on the path to fibril formation. Copper binding may promote oligomerization. Interacts with GRB2, APP, ERI3/PRNPIP and SYN1. Mislocalized cytosolically exposed PrP interacts with MGRN1; this interaction alters MGRN1 subcellular location and causes lysosomal enlargement. Interacts with KIAA1191.

The protein localises to the cell membrane. Its subcellular location is the golgi apparatus. Its primary physiological function is unclear. Has cytoprotective activity against internal or environmental stresses. May play a role in neuronal development and synaptic plasticity. May be required for neuronal myelin sheath maintenance. May play a role in iron uptake and iron homeostasis. Soluble oligomers are toxic to cultured neuroblastoma cells and induce apoptosis (in vitro). Association with GPC1 (via its heparan sulfate chains) targets PRNP to lipid rafts. Also provides Cu(2+) or Zn(2+) for the ascorbate-mediated GPC1 deaminase degradation of its heparan sulfate side chains. This chain is Major prion protein (PRNP), found in Cercocebus atys (Sooty mangabey).